A 511-amino-acid chain; its full sequence is Archaeal glutamate synthase [NADPH] (511 aa).

4Fe-4S ferredoxin-type domains lie at 15 to 44 and 46 to 75; these read FMIE…YDEE and DMMR…VKPH. 8 residues coordinate [4Fe-4S] cluster: C24, C27, C30, C34, C55, C58, C61, and C65.

Belongs to the glutamate synthase family. Requires FMN as cofactor.

It carries out the reaction 2 L-glutamate + NADP(+) = L-glutamine + 2-oxoglutarate + NADPH + H(+). In Archaeoglobus fulgidus (strain ATCC 49558 / DSM 4304 / JCM 9628 / NBRC 100126 / VC-16), this protein is Archaeal glutamate synthase [NADPH].